A 164-amino-acid polypeptide reads, in one-letter code: MTEGKAEKPVVESFQLDHTKVKAPYVRYIDTETGPHGDVISNYDLRLTQPNKQAIPTGGLHTIEHTIAVLLRERIPGYIDCSPFGCRTGFHLLTWGTHSTEDVAKALKESLEFIAYKATWDDVPATTEKSCGNYRDHSLFAAKEWAKQILEEGISSDPFERKVV.

Residues His61, His65, and Cys131 each contribute to the Fe cation site.

Belongs to the LuxS family. As to quaternary structure, homodimer. Fe cation is required as a cofactor.

The enzyme catalyses S-(5-deoxy-D-ribos-5-yl)-L-homocysteine = (S)-4,5-dihydroxypentane-2,3-dione + L-homocysteine. In terms of biological role, involved in the synthesis of autoinducer 2 (AI-2) which is secreted by bacteria and is used to communicate both the cell density and the metabolic potential of the environment. The regulation of gene expression in response to changes in cell density is called quorum sensing. Catalyzes the transformation of S-ribosylhomocysteine (RHC) to homocysteine (HC) and 4,5-dihydroxy-2,3-pentadione (DPD). The sequence is that of S-ribosylhomocysteine lyase from Bifidobacterium longum subsp. infantis (strain ATCC 15697 / DSM 20088 / JCM 1222 / NCTC 11817 / S12).